A 396-amino-acid chain; its full sequence is Calreticulin (396 aa).

The signal sequence occupies residues 1–15 (MKSLCLLAIVAVVSA). Cysteine 101 and cysteine 133 are disulfide-bonded. 4 residues coordinate an alpha-D-glucoside: tyrosine 105, lysine 107, tyrosine 124, and aspartate 131. Repeat copies occupy residues 186 to 197 (AQTGSLEEDWDL), 205 to 216 (DPDAKKPEDWDE), 222 to 233 (DAEDVKPEDWEK), 239 to 250 (DPDAKKPEDWDD), 254 to 264 (GEWEPPMIDNP), 268 to 278 (GEWKPKQIKNP), and 282 to 292 (GKWIHPEIENP). A 4 X approximate repeats region spans residues 186–250 (AQTGSLEEDW…DAKKPEDWDD (65 aa)). The tract at residues 193–301 (EDWDLLPAKK…PEYTPDDELY (109 aa)) is P-domain. Basic and acidic residues predominate over residues 202–212 (KIKDPDAKKPE). The segment at 202–250 (KIKDPDAKKPEDWDEREYIDDAEDVKPEDWEKPEHIPDPDAKKPEDWDD) is disordered. Positions 213–224 (DWDEREYIDDAE) are enriched in acidic residues. The span at 225–246 (DVKPEDWEKPEHIPDPDAKKPE) shows a compositional bias: basic and acidic residues. The segment at 254–292 (GEWEPPMIDNPEYKGEWKPKQIKNPAYKGKWIHPEIENP) is 3 X approximate repeats. The C-domain stretch occupies residues 302–396 (LYENWGAIGF…KEEEEGHDEL (95 aa)). An alpha-D-glucoside is bound at residue aspartate 312. A compositionally biased stretch (basic and acidic residues) spans 342-380 (FDKLKTVEKEKKEKADEEARKVEEEARKKAEEEKEAKKD). A disordered region spans residues 342–396 (FDKLKTVEKEKKEKADEEARKVEEEARKKAEEEKEAKKDDDEEEEKEEEEGHDEL). The segment covering 381–396 (DDEEEEKEEEEGHDEL) has biased composition (acidic residues). The Prevents secretion from ER signature appears at 393–396 (HDEL).

The protein belongs to the calreticulin family.

Its subcellular location is the endoplasmic reticulum lumen. In terms of biological role, molecular calcium-binding chaperone promoting folding, oligomeric assembly and quality control in the ER via the calreticulin/calnexin cycle. This lectin may interact transiently with almost all of the monoglucosylated glycoproteins that are synthesized in the ER. Probably by controlling the folding of extracellular matrix protein unc-52/Perlecan, may play a role in the formation of fibrous organelles, a hemidesmosome-like structure attaching muscles to the epidermis. Protects dopaminergic neurons against oxidative stress-induced neurodegeneration. The protein is Calreticulin (crt-1) of Caenorhabditis briggsae.